Consider the following 239-residue polypeptide: LexA repressor (239 aa).

Residues F26–T46 constitute a DNA-binding region (H-T-H motif). The segment at R80–A108 is disordered. Active-site for autocatalytic cleavage activity residues include S159 and K197.

This sequence belongs to the peptidase S24 family. As to quaternary structure, homodimer.

The catalysed reaction is Hydrolysis of Ala-|-Gly bond in repressor LexA.. Functionally, represses a number of genes involved in the response to DNA damage (SOS response), including recA and lexA. In the presence of single-stranded DNA, RecA interacts with LexA causing an autocatalytic cleavage which disrupts the DNA-binding part of LexA, leading to derepression of the SOS regulon and eventually DNA repair. The chain is LexA repressor from Rhizobium leguminosarum bv. trifolii (strain WSM2304).